Reading from the N-terminus, the 511-residue chain is Bifunctional purine biosynthesis protein PurH (511 aa).

Residues 1–145 (MKQRALVSVS…KNHKFVSVIV (145 aa)) form the MGS-like domain.

Belongs to the PurH family.

It carries out the reaction (6R)-10-formyltetrahydrofolate + 5-amino-1-(5-phospho-beta-D-ribosyl)imidazole-4-carboxamide = 5-formamido-1-(5-phospho-D-ribosyl)imidazole-4-carboxamide + (6S)-5,6,7,8-tetrahydrofolate. The enzyme catalyses IMP + H2O = 5-formamido-1-(5-phospho-D-ribosyl)imidazole-4-carboxamide. It functions in the pathway purine metabolism; IMP biosynthesis via de novo pathway; 5-formamido-1-(5-phospho-D-ribosyl)imidazole-4-carboxamide from 5-amino-1-(5-phospho-D-ribosyl)imidazole-4-carboxamide (10-formyl THF route): step 1/1. The protein operates within purine metabolism; IMP biosynthesis via de novo pathway; IMP from 5-formamido-1-(5-phospho-D-ribosyl)imidazole-4-carboxamide: step 1/1. The chain is Bifunctional purine biosynthesis protein PurH from Bacillus cereus (strain AH187).